The following is a 534-amino-acid chain: Cytidylyl-2-hydroxyethylphosphonate methyltransferase (534 aa).

Residues 38–195 (KVLLLNPSAT…EHLNGNVSDD (158 aa)) form the B12-binding domain. Positions 268–496 (TVGSRVGQLY…TYKQGIINVP (229 aa)) constitute a Radical SAM core domain. [4Fe-4S] cluster is bound by residues Cys282, Cys286, and Cys289.

It belongs to the radical SAM superfamily. It depends on [4Fe-4S] cluster as a cofactor. Methylcob(III)alamin serves as cofactor.

The enzyme catalyses cytidine 5'-{[hydroxy(2-hydroxyethyl)phosphonoyl]phosphate} + AH2 + 2 S-adenosyl-L-methionine = cytidine 5'-({hydroxy[(S)-2-hydroxypropyl]phosphonoyl}phosphate) + 5'-deoxyadenosine + L-methionine + A + S-adenosyl-L-homocysteine + 2 H(+). It functions in the pathway antibiotic biosynthesis; fosfomycin biosynthesis. Involved in fosfomycin biosynthesis. Catalyzes the C-methylation of cytidylyl-2-hydroxyethylphosphonate (HEP-CMP) to form cytidylyl-2-hydroxypropylphosphonate (HPP-CMP). The C-methylation is not stereoselective and the ratio of (S)- to (R)-HPP-CMP is almost equal in vitro. This chain is Cytidylyl-2-hydroxyethylphosphonate methyltransferase, found in Streptomyces wedmorensis.